Consider the following 689-residue polypeptide: Methionine--tRNA ligase (689 aa).

The 'HIGH' region motif lies at 15 to 25; the sequence is PYANGPIHLGH. Zn(2+)-binding residues include cysteine 146, cysteine 149, cysteine 159, and cysteine 162. A 'KMSKS' region motif is present at residues 332–336; that stretch reads KMSKS. ATP is bound at residue lysine 335. The tRNA-binding domain maps to 588–689; that stretch reads DFAKIDLRIA…EGAQPGMRVK (102 aa).

Belongs to the class-I aminoacyl-tRNA synthetase family. MetG type 1 subfamily. Homodimer. Requires Zn(2+) as cofactor.

Its subcellular location is the cytoplasm. It catalyses the reaction tRNA(Met) + L-methionine + ATP = L-methionyl-tRNA(Met) + AMP + diphosphate. Functionally, is required not only for elongation of protein synthesis but also for the initiation of all mRNA translation through initiator tRNA(fMet) aminoacylation. The chain is Methionine--tRNA ligase from Shewanella baltica (strain OS155 / ATCC BAA-1091).